A 140-amino-acid chain; its full sequence is MLKTISPLISPELLKVLAEMGHGDEIIFSDAHFPAHSMGPQVIRADGLRVSDLLQAIIPLFELDSYAPPLVMMAAVEGDALDPTVEQCYRQALSAQAPCPDIVRIDRFAFYDRAQKAFAIVITGERAKYGNILLKKGVTP.

H22 acts as the Proton donor in catalysis. Substrate contacts are provided by residues D30, R107, and 129–131; that span reads YGN.

The protein belongs to the RbsD / FucU family. FucU mutarotase subfamily. As to quaternary structure, homodecamer.

Its subcellular location is the cytoplasm. The enzyme catalyses alpha-L-fucose = beta-L-fucose. The protein operates within carbohydrate metabolism; L-fucose metabolism. In terms of biological role, involved in the anomeric conversion of L-fucose. The polypeptide is L-fucose mutarotase (Klebsiella pneumoniae (strain 342)).